The following is a 529-amino-acid chain: Isoleucine--tRNA ligase (529 aa).

Glutamate 482 is a binding site for L-isoleucyl-5'-AMP. A 'KMSKS' region motif is present at residues 523-527 (KMSKS). Lysine 526 contacts ATP.

This sequence belongs to the class-I aminoacyl-tRNA synthetase family. IleS type 1 subfamily. In terms of assembly, monomer.

It is found in the cytoplasm. It carries out the reaction tRNA(Ile) + L-isoleucine + ATP = L-isoleucyl-tRNA(Ile) + AMP + diphosphate. Functionally, catalyzes the attachment of isoleucine to tRNA(Ile). As IleRS can inadvertently accommodate and process structurally similar amino acids such as valine, to avoid such errors it has two additional distinct tRNA(Ile)-dependent editing activities. One activity is designated as 'pretransfer' editing and involves the hydrolysis of activated Val-AMP. The other activity is designated 'posttransfer' editing and involves deacylation of mischarged Val-tRNA(Ile). This is Isoleucine--tRNA ligase (ileS) from Aquifex pyrophilus.